The sequence spans 62 residues: MAKTIVIKQIGSPIRRPAKQRATLIGLGLNKMHKTRELEDTPSVRGMINSIPHMVEIVEEKG.

This sequence belongs to the universal ribosomal protein uL30 family. As to quaternary structure, part of the 50S ribosomal subunit.

The protein is Large ribosomal subunit protein uL30 of Roseobacter denitrificans (strain ATCC 33942 / OCh 114) (Erythrobacter sp. (strain OCh 114)).